The primary structure comprises 224 residues: Fibronectin type III domain-containing protein 9 (224 aa).

Residues 1–101 (MNIEVGNISY…FHTLDKSPLA (101 aa)) form the Fibronectin type-III domain. The chain crosses the membrane as a helical span at residues 113 to 133 (LWVLMAILLACFTAVLAFICL). The tract at residues 175–224 (LQGLPLVEMPRKNSRDGAELDPEANQDAPDAGALQRGGGDPPAILPHCGE) is disordered. Basic and acidic residues predominate over residues 183-192 (MPRKNSRDGA).

It is found in the membrane. The protein is Fibronectin type III domain-containing protein 9 (FNDC9) of Homo sapiens (Human).